A 124-amino-acid chain; its full sequence is Large ribosomal subunit protein bL12 (124 aa).

It belongs to the bacterial ribosomal protein bL12 family. In terms of assembly, homodimer. Part of the ribosomal stalk of the 50S ribosomal subunit. Forms a multimeric L10(L12)X complex, where L10 forms an elongated spine to which 2 to 4 L12 dimers bind in a sequential fashion. Binds GTP-bound translation factors.

Forms part of the ribosomal stalk which helps the ribosome interact with GTP-bound translation factors. Is thus essential for accurate translation. The sequence is that of Large ribosomal subunit protein bL12 from Azobacteroides pseudotrichonymphae genomovar. CFP2.